The chain runs to 200 residues: CASP-like protein 1U2 (200 aa).

The Cytoplasmic segment spans residues 1–33 (MAEPVIVVPRKGVYSDDSYHHHHRHHSFHSCTN). Residues 34-54 (FLLRTLTAGATAAAVVVMLIS) form a helical membrane-spanning segment. Residues 55 to 77 (TQTSGTIYGYFRGRWRDYPAYKW) lie on the Extracellular side of the membrane. Residues 78 to 98 (LIIANAVVFVYSVMAAIVACF) traverse the membrane as a helical segment. Over 99–120 (SVIARRGPLSYSPSAWLTLLVD) the chain is Cytoplasmic. Residues 121–141 (FLAASALISAASAALAVALLA) traverse the membrane as a helical segment. Residues 142–168 (RNGQDLQGTHYWPTVCNYVSKFCDYTQ) lie on the Extracellular side of the membrane. Residues 169 to 189 (GAIIASFVGFGLLFLSTLLAA) form a helical membrane-spanning segment. The Cytoplasmic portion of the chain corresponds to 190–200 (SALYHLSHRRH).

It belongs to the Casparian strip membrane proteins (CASP) family. Homodimer and heterodimers.

It localises to the cell membrane. This Physcomitrium patens (Spreading-leaved earth moss) protein is CASP-like protein 1U2.